Reading from the N-terminus, the 480-residue chain is MPKEVITQRSVDYNQWYLDIVREADLAEVAEVVRGCIVVKAHGWAIWELMQRALDDRIKATGHANVQFPLLIPKSFIMKEAEHVEGFAPEVAEVTRAGGEELAEPYVIRPTSETIIGYFYSKWIRSYRDLPLLYNQWANVMRWEMRTRPFLRTAEFWWQEGHTAHATEAEAEEETLRILHEVYADFVEKEMAVPVIRGLKTEKEKFPGALRSYCIEAMMQDGRALQAGTSHNLGQNFARAFDITFTDQHNTIQYAWTTSWGVSTRLIGALIMTHSDDEGLVLPPRLAPIQVVVVPIYKNDEERSAVMEAVNRMTAAWKGRLRFKVDDRDTYSPGYKFNEWELKGVPVRIEIGPKDVAKETVALARRDMPGKAGKSFVPQAGLTERIEALLAEMQTGLFQRALAFREARTADVTTYDELKEQIERGFARAYWAGSTADEKRIQEETRATIRCIPLEQPGTVGRCVYTGRETDRQVIFARAY.

This sequence belongs to the class-II aminoacyl-tRNA synthetase family. ProS type 3 subfamily. Homodimer.

Its subcellular location is the cytoplasm. It carries out the reaction tRNA(Pro) + L-proline + ATP = L-prolyl-tRNA(Pro) + AMP + diphosphate. Functionally, catalyzes the attachment of proline to tRNA(Pro) in a two-step reaction: proline is first activated by ATP to form Pro-AMP and then transferred to the acceptor end of tRNA(Pro). This Chloroflexus aggregans (strain MD-66 / DSM 9485) protein is Proline--tRNA ligase.